The sequence spans 629 residues: MSAAETNQLQESMEKLNIGSTTEEQSAAAATTTADQSAEEQGESSGVAENSASLYVGELNPSVNEATLFEIFSPIGQVSSIRVCRDAVSKKSLGYAYVNYHKYEDGEKAIEELNYNPIEGRPCRIMWSQRDPSARRSGDGNIFIKNLHPAIDNKALHDTFSAFGKILSCKVATDEFGQSKCFGFVHYETAEAAEAAIENVNGMLLNDREVFVGKHISKKDRESKFEEMKANFTNIYVKNIDLNYSEESFEKLFSPFGKITSIYLEKDQDGKSKGFGFVNFEDHESAVKAVEELNDKEINGQKIYVGRAQKKRERLEELKKQYEAVRLEKLAKYQGVNLFVKNLDDTIDSEKLEEEFKPFGTITSAKVMVDEAGKSKGFGFVCFTTPEEATKAITEMNTRMINGKPLYVALAQRKDVRRSQLEQQIQARNQMRMQNAAAGGLPGQFIPPMFYGQQGFFPPNGRGNAPYPGPNPQMMMRGRGQPFPEQWPRPGPNGQPVPVYGIPPQFQQDFNGQNMRPQQQQQQQPRGGYYPNRNQTSKRDLAAIISSVPQDQQKRILGEELYPKIVATGKAQEPEAAGKITGMMLGLENQEILDLLDDDELFNNHFEDALTAFEEYKKSEAAGNAEEQA.

The segment covering 1–11 has biased composition (polar residues); it reads MSAAETNQLQE. The tract at residues 1–48 is disordered; the sequence is MSAAETNQLQESMEKLNIGSTTEEQSAAAATTTADQSAEEQGESSGVA. The span at 20–36 shows a compositional bias: low complexity; that stretch reads STTEEQSAAAATTTADQ. 4 consecutive RRM domains span residues 52 to 130, 140 to 217, 233 to 310, and 336 to 413; these read ASLY…WSQR, GNIF…KHIS, TNIY…RAQK, and VNLF…LAQR. The tract at residues 503–534 is disordered; that stretch reads PPQFQQDFNGQNMRPQQQQQQQPRGGYYPNRN. The span at 505 to 517 shows a compositional bias: polar residues; it reads QFQQDFNGQNMRP. Residues 537-618 enclose the PABC domain; that stretch reads SKRDLAAIIS…ALTAFEEYKK (82 aa).

It belongs to the polyadenylate-binding protein type-1 family.

It localises to the cytoplasm. Its subcellular location is the nucleus. In terms of biological role, binds the poly(A) tail of mRNA. Appears to be an important mediator of the multiple roles of the poly(A) tail in mRNA biogenesis, stability and translation. In the nucleus, involved in both mRNA cleavage and polyadenylation. Is also required for efficient mRNA export to the cytoplasm. Acts in concert with a poly(A)-specific nuclease (PAN) to affect poly(A) tail shortening, which may occur concomitantly with either nucleocytoplasmic mRNA transport or translational initiation. In the cytoplasm, stimulates translation initiation and regulates mRNA decay through translation termination-coupled poly(A) shortening, probably mediated by PAN. The sequence is that of Polyadenylate-binding protein, cytoplasmic and nuclear (PAB1) from Candida albicans (strain SC5314 / ATCC MYA-2876) (Yeast).